A 172-amino-acid chain; its full sequence is Disulfide bond formation protein B (172 aa).

Residues 1–11 (MNPFRWSFRAQ) lie on the Cytoplasmic side of the membrane. The helical transmembrane segment at 12 to 28 (FLLGFLACAGLLAYAIY) threads the bilayer. Residues 29 to 46 (VQLHLGLEPCPLCIFQRI) lie on the Periplasmic side of the membrane. An intrachain disulfide couples cysteine 38 to cysteine 41. The chain crosses the membrane as a helical span at residues 47-63 (AFAALAVFFLIGALHGP). Residues 64–70 (RAAGARK) lie on the Cytoplasmic side of the membrane. Residues 71–88 (VYGVLSFIAAGVGMGIGA) form a helical membrane-spanning segment. The Periplasmic portion of the chain corresponds to 89-145 (RHVWVQIRPKDMMSSCGPPLSFLSETMGPFEVFRTVLTGTGDCGNIDWRFLGLSMPM). Cysteine 104 and cysteine 131 are joined by a disulfide. A helical membrane pass occupies residues 146–164 (WSMVWFVGLALWALSAGFK). Residues 165 to 172 (ARRSSLHH) are Cytoplasmic-facing.

This sequence belongs to the DsbB family.

Its subcellular location is the cell inner membrane. In terms of biological role, required for disulfide bond formation in some periplasmic proteins. Acts by oxidizing the DsbA protein. The polypeptide is Disulfide bond formation protein B (Xanthomonas oryzae pv. oryzae (strain MAFF 311018)).